Here is a 360-residue protein sequence, read N- to C-terminus: Phosphoserine aminotransferase (360 aa).

Arg-42 lines the L-glutamate pocket. Residues 76-77, Trp-102, Thr-152, Asp-171, and Gln-194 contribute to the pyridoxal 5'-phosphate site; that span reads AS. Lys-195 is subject to N6-(pyridoxal phosphate)lysine. 236–237 lines the pyridoxal 5'-phosphate pocket; that stretch reads NT.

Belongs to the class-V pyridoxal-phosphate-dependent aminotransferase family. SerC subfamily. In terms of assembly, homodimer. Pyridoxal 5'-phosphate is required as a cofactor.

The protein resides in the cytoplasm. It carries out the reaction O-phospho-L-serine + 2-oxoglutarate = 3-phosphooxypyruvate + L-glutamate. It catalyses the reaction 4-(phosphooxy)-L-threonine + 2-oxoglutarate = (R)-3-hydroxy-2-oxo-4-phosphooxybutanoate + L-glutamate. The protein operates within amino-acid biosynthesis; L-serine biosynthesis; L-serine from 3-phospho-D-glycerate: step 2/3. In terms of biological role, catalyzes the reversible conversion of 3-phosphohydroxypyruvate to phosphoserine and of 3-hydroxy-2-oxo-4-phosphonooxybutanoate to phosphohydroxythreonine. The protein is Phosphoserine aminotransferase of Geobacillus kaustophilus (strain HTA426).